A 357-amino-acid chain; its full sequence is MDLYGVLKPLFRFMTPEQAHHLSIRVLKSGLVPDLSGGPDDPVLATRVWGLDFPNPVGLAAGFDKHCEVADALFRFGFGFVEAGTVTPRPQPGNPLPRLFRLDEDEAVINRFGFNSEGLAPFVFRLGQRRASGKHGIVGANVGKNKESEDALEDYGAGVSATCRLADYLVCNISSPNTPGLRALQARAEMETLLAHVISVRNASMPDPAARTPLLVKVAPDLDDAALADVAEASLATGVDGIIMGNTTLSRPASLQSKFKDETGGLSGKPLLALSTERLGALYRLVGGRLPIIGVGGIASGADAYAKVRAGASLVQIYSALVFHGPGLVTRIKTDLAARLKADGFASIADAVGVDVR.

Residues 61–65 (AGFDK) and Thr85 contribute to the FMN site. Lys65 is a substrate binding site. 110 to 114 (NRFGF) contributes to the substrate binding site. FMN-binding residues include Asn141 and Asn172. Asn172 is a substrate binding site. The active-site Nucleophile is Ser175. Asn177 lines the substrate pocket. Residues Lys217 and Gly245 each contribute to the FMN site. 246-247 (NT) contacts substrate. FMN is bound by residues Gly268, Gly297, and 318-319 (YS).

Belongs to the dihydroorotate dehydrogenase family. Type 2 subfamily. In terms of assembly, monomer. FMN serves as cofactor.

It localises to the cell membrane. It catalyses the reaction (S)-dihydroorotate + a quinone = orotate + a quinol. It participates in pyrimidine metabolism; UMP biosynthesis via de novo pathway; orotate from (S)-dihydroorotate (quinone route): step 1/1. Functionally, catalyzes the conversion of dihydroorotate to orotate with quinone as electron acceptor. This chain is Dihydroorotate dehydrogenase (quinone), found in Xanthobacter autotrophicus (strain ATCC BAA-1158 / Py2).